A 318-amino-acid polypeptide reads, in one-letter code: Ribonuclease Z (318 aa).

H62, H64, D66, H67, H140, D211, and H269 together coordinate Zn(2+). Residue D66 is the Proton acceptor of the active site.

It belongs to the RNase Z family. Homodimer. It depends on Zn(2+) as a cofactor.

The enzyme catalyses Endonucleolytic cleavage of RNA, removing extra 3' nucleotides from tRNA precursor, generating 3' termini of tRNAs. A 3'-hydroxy group is left at the tRNA terminus and a 5'-phosphoryl group is left at the trailer molecule.. Functionally, zinc phosphodiesterase, which displays some tRNA 3'-processing endonuclease activity. Probably involved in tRNA maturation, by removing a 3'-trailer from precursor tRNA. In Brevibacillus brevis (strain 47 / JCM 6285 / NBRC 100599), this protein is Ribonuclease Z.